We begin with the raw amino-acid sequence, 412 residues long: ATP phosphoribosyltransferase regulatory subunit (412 aa).

It belongs to the class-II aminoacyl-tRNA synthetase family. HisZ subfamily. In terms of assembly, heteromultimer composed of HisG and HisZ subunits.

The protein localises to the cytoplasm. It participates in amino-acid biosynthesis; L-histidine biosynthesis; L-histidine from 5-phospho-alpha-D-ribose 1-diphosphate: step 1/9. In terms of biological role, required for the first step of histidine biosynthesis. May allow the feedback regulation of ATP phosphoribosyltransferase activity by histidine. This chain is ATP phosphoribosyltransferase regulatory subunit, found in Dehalococcoides mccartyi (strain CBDB1).